Here is a 405-residue protein sequence, read N- to C-terminus: Acetate kinase (405 aa).

A Mg(2+)-binding site is contributed by asparagine 7. ATP is bound at residue lysine 14. Arginine 91 contributes to the substrate binding site. The active-site Proton donor/acceptor is aspartate 148. Residues 208–212 and 283–285 each bind ATP; these read HLGNG and DFR. Residue glutamate 384 participates in Mg(2+) binding.

The protein belongs to the acetokinase family. As to quaternary structure, homodimer. Mg(2+) is required as a cofactor. The cofactor is Mn(2+).

It localises to the cytoplasm. The enzyme catalyses acetate + ATP = acetyl phosphate + ADP. It participates in metabolic intermediate biosynthesis; acetyl-CoA biosynthesis; acetyl-CoA from acetate: step 1/2. Its function is as follows. Catalyzes the formation of acetyl phosphate from acetate and ATP. Can also catalyze the reverse reaction. This Dictyoglomus turgidum (strain DSM 6724 / Z-1310) protein is Acetate kinase.